Here is a 381-residue protein sequence, read N- to C-terminus: Cytochrome b (381 aa).

4 helical membrane passes run F33–M53, W77–V98, W113–L133, and F178–L198. The heme b site is built by H83 and H97. H182 and H196 together coordinate heme b. H201 is an a ubiquinone binding site. 4 helical membrane-spanning segments follow: residues I226–S246, L288–H308, I320–G340, and F347–P367.

The protein belongs to the cytochrome b family. As to quaternary structure, the cytochrome bc1 complex contains 11 subunits: 3 respiratory subunits (MT-CYB, CYC1 and UQCRFS1), 2 core proteins (UQCRC1 and UQCRC2) and 6 low-molecular weight proteins (UQCRH/QCR6, UQCRB/QCR7, UQCRQ/QCR8, UQCR10/QCR9, UQCR11/QCR10 and a cleavage product of UQCRFS1). This cytochrome bc1 complex then forms a dimer. Requires heme b as cofactor.

The protein resides in the mitochondrion inner membrane. Component of the ubiquinol-cytochrome c reductase complex (complex III or cytochrome b-c1 complex) that is part of the mitochondrial respiratory chain. The b-c1 complex mediates electron transfer from ubiquinol to cytochrome c. Contributes to the generation of a proton gradient across the mitochondrial membrane that is then used for ATP synthesis. In Pseudantechinus bilarni (Sandstone dibbler), this protein is Cytochrome b (MT-CYB).